A 152-amino-acid polypeptide reads, in one-letter code: Arginine repressor (152 aa).

This sequence belongs to the ArgR family.

Its subcellular location is the cytoplasm. The protein operates within amino-acid biosynthesis; L-arginine biosynthesis [regulation]. Its function is as follows. Regulates arginine biosynthesis genes. In Caldicellulosiruptor bescii (strain ATCC BAA-1888 / DSM 6725 / KCTC 15123 / Z-1320) (Anaerocellum thermophilum), this protein is Arginine repressor.